The chain runs to 587 residues: Phosphatidylinositol-3-phosphatase SAC1 (587 aa).

Topologically, residues 1–520 are cytoplasmic; the sequence is MATAAYEQLK…SPLSVPRDWK (520 aa). In terms of domain architecture, SAC spans 122–451; it reads LNHVLNVDGF…ANACAKQYAG (330 aa). The tract at residues 452–587 is essential for phosphatidylinositol-4-phosphate phosphatase activity; the sequence is TGALKTDFTR…PRLVQKEKID (136 aa). Lys456 bears the N6-acetyllysine mark. The helical transmembrane segment at 521–541 threads the bilayer; the sequence is FLALPIIMVVAFSMCIICLLM. The Lumenal segment spans residues 542-548; that stretch reads AGDTWTE. Residues 549-569 traverse the membrane as a helical segment; the sequence is TLAYVLFWGVASIGTFFIILY. Residues 570-587 lie on the Cytoplasmic side of the membrane; that stretch reads NGKDFVDAPRLVQKEKID.

In terms of assembly, interacts with TMEM39A. Interacts with SEC23A and SEC24A; this interaction is reduced in the absence of TMEM39A. Interacts with PLEKHA3 and VAPA and/or VAPB to form a ternary complex.

The protein localises to the endoplasmic reticulum membrane. The protein resides in the golgi apparatus membrane. The enzyme catalyses a 1,2-diacyl-sn-glycero-3-phospho-(1D-myo-inositol-3-phosphate) + H2O = a 1,2-diacyl-sn-glycero-3-phospho-(1D-myo-inositol) + phosphate. The catalysed reaction is a 1,2-diacyl-sn-glycero-3-phospho-(1D-myo-inositol 4-phosphate) + H2O = a 1,2-diacyl-sn-glycero-3-phospho-(1D-myo-inositol) + phosphate. Phosphoinositide phosphatase which catalyzes the hydrolysis of phosphatidylinositol 4-phosphate (PtdIns(4)P), phosphatidylinositol 3-phosphate (PtdIns(3)P) and has low activity towards phosphatidylinositol-3,5-bisphosphate (PtdIns(3,5)P2). Shows a very robust PtdIns(4)P phosphatase activity when it binds PtdIns(4)P in a 'cis' configuration in the cellular environment, with much less activity seen when it binds PtdIns(4)P in 'trans' configuration. PtdIns(4)P phosphatase activity (when it binds PtdIns(4)P in 'trans' configuration) is enhanced in the presence of PLEKHA3. This chain is Phosphatidylinositol-3-phosphatase SAC1 (SACM1L), found in Pongo abelii (Sumatran orangutan).